Reading from the N-terminus, the 390-residue chain is Imidazolonepropionase (390 aa).

Fe(3+) contacts are provided by His71 and His73. The Zn(2+) site is built by His71 and His73. 4-imidazolone-5-propanoate-binding residues include Arg80, Tyr138, and His165. An N-formimidoyl-L-glutamate-binding site is contributed by Tyr138. Residue His228 participates in Fe(3+) binding. His228 serves as a coordination point for Zn(2+). A 4-imidazolone-5-propanoate-binding site is contributed by Gln231. Asp302 contributes to the Fe(3+) binding site. Asp302 provides a ligand contact to Zn(2+). Asn304 and Gly306 together coordinate N-formimidoyl-L-glutamate. Ser307 contacts 4-imidazolone-5-propanoate.

The protein belongs to the metallo-dependent hydrolases superfamily. HutI family. Zn(2+) serves as cofactor. It depends on Fe(3+) as a cofactor.

It is found in the cytoplasm. It carries out the reaction 4-imidazolone-5-propanoate + H2O = N-formimidoyl-L-glutamate. It functions in the pathway amino-acid degradation; L-histidine degradation into L-glutamate; N-formimidoyl-L-glutamate from L-histidine: step 3/3. Functionally, catalyzes the hydrolytic cleavage of the carbon-nitrogen bond in imidazolone-5-propanoate to yield N-formimidoyl-L-glutamate. It is the third step in the universal histidine degradation pathway. The sequence is that of Imidazolonepropionase from Streptomyces griseus subsp. griseus (strain JCM 4626 / CBS 651.72 / NBRC 13350 / KCC S-0626 / ISP 5235).